We begin with the raw amino-acid sequence, 412 residues long: uncharacterized protein (412 aa).

The TRAM domain maps to 6–64 (ELAKGDIISVEVLRPAHGGEGIGHHDGRVIFVKGGIPGDVVDVEIAQLKKKWARGEVVK). The S-adenosyl-L-methionine site is built by Q242, Y278, E300, and D341. Catalysis depends on C368, which acts as the Nucleophile.

Belongs to the class I-like SAM-binding methyltransferase superfamily. RNA M5U methyltransferase family.

This is an uncharacterized protein from Corynebacterium glutamicum (strain ATCC 13032 / DSM 20300 / JCM 1318 / BCRC 11384 / CCUG 27702 / LMG 3730 / NBRC 12168 / NCIMB 10025 / NRRL B-2784 / 534).